A 72-amino-acid chain; its full sequence is Translation initiation factor IF-1 (72 aa).

The S1-like domain maps to 1–72 (MSKSDIIEMQ…TRGRITWRAK (72 aa)).

It belongs to the IF-1 family. In terms of assembly, component of the 30S ribosomal translation pre-initiation complex which assembles on the 30S ribosome in the order IF-2 and IF-3, IF-1 and N-formylmethionyl-tRNA(fMet); mRNA recruitment can occur at any time during PIC assembly.

It is found in the cytoplasm. One of the essential components for the initiation of protein synthesis. Stabilizes the binding of IF-2 and IF-3 on the 30S subunit to which N-formylmethionyl-tRNA(fMet) subsequently binds. Helps modulate mRNA selection, yielding the 30S pre-initiation complex (PIC). Upon addition of the 50S ribosomal subunit IF-1, IF-2 and IF-3 are released leaving the mature 70S translation initiation complex. This is Translation initiation factor IF-1 from Clostridium perfringens (strain 13 / Type A).